The sequence spans 196 residues: Probable inactive nicotinamidase At3g16190 (196 aa).

Belongs to the isochorismatase family.

Does not possess nicotinamidase activity in vitro. This Arabidopsis thaliana (Mouse-ear cress) protein is Probable inactive nicotinamidase At3g16190.